Consider the following 291-residue polypeptide: MSDILKFGIPKGSLEDATVDLFAKAGWKISISSRSYFPGVDDAELNCKLIRPQEMGKYVERGTIDVGIAGRDWVRENDSDVVEVCEMVYSKVSRRPVRWVLVVAQDSKVQRPEDLAGATLSTELVGFTKRYFAERNIPVTVEFSWGATEAKVVDGLCDAIVEVTETGSTIRANNLRIVCDLMESVPVMIANRKSWEDPWKREKIETIATLLKSALAAEGMVGLKMNAPGDKADAITKVLPSQKAPTVSHLYNSDWVSIESILNEKEVRSIVPALLKLGAEGIVEYPLNKII.

This sequence belongs to the ATP phosphoribosyltransferase family. Long subfamily. Requires Mg(2+) as cofactor.

Its subcellular location is the cytoplasm. It catalyses the reaction 1-(5-phospho-beta-D-ribosyl)-ATP + diphosphate = 5-phospho-alpha-D-ribose 1-diphosphate + ATP. It functions in the pathway amino-acid biosynthesis; L-histidine biosynthesis; L-histidine from 5-phospho-alpha-D-ribose 1-diphosphate: step 1/9. With respect to regulation, feedback inhibited by histidine. Its function is as follows. Catalyzes the condensation of ATP and 5-phosphoribose 1-diphosphate to form N'-(5'-phosphoribosyl)-ATP (PR-ATP). Has a crucial role in the pathway because the rate of histidine biosynthesis seems to be controlled primarily by regulation of HisG enzymatic activity. The chain is ATP phosphoribosyltransferase from Geotalea daltonii (strain DSM 22248 / JCM 15807 / FRC-32) (Geobacter daltonii).